The following is a 228-amino-acid chain: Methylthioribulose-1-phosphate dehydratase (228 aa).

Substrate is bound at residue Cys92. Positions 110 and 112 each coordinate Zn(2+). Catalysis depends on Glu135, which acts as the Proton donor/acceptor. His192 contributes to the Zn(2+) binding site.

Belongs to the aldolase class II family. MtnB subfamily. Zn(2+) serves as cofactor.

The protein localises to the cytoplasm. The protein resides in the nucleus. The enzyme catalyses 5-(methylsulfanyl)-D-ribulose 1-phosphate = 5-methylsulfanyl-2,3-dioxopentyl phosphate + H2O. Its pathway is amino-acid biosynthesis; L-methionine biosynthesis via salvage pathway; L-methionine from S-methyl-5-thio-alpha-D-ribose 1-phosphate: step 2/6. Its function is as follows. Catalyzes the dehydration of methylthioribulose-1-phosphate (MTRu-1-P) into 2,3-diketo-5-methylthiopentyl-1-phosphate (DK-MTP-1-P). This is Methylthioribulose-1-phosphate dehydratase from Schizosaccharomyces pombe (strain 972 / ATCC 24843) (Fission yeast).